The chain runs to 380 residues: Cytochrome b (380 aa).

4 helical membrane passes run 33–53 (FGSLLGLCLATQILTGLFLAM), 77–98 (WLIRNIHANGASFFFICIYMHI), 113–133 (WNIGVVLLLLTMMTAFVGYVL), and 178–198 (FFAFHFLFPFVIAAATVLHLL). Heme b is bound by residues H83 and H97. Heme b contacts are provided by H182 and H196. H201 contributes to the a ubiquinone binding site. Helical transmembrane passes span 226–246 (YKDLLGFVAMLLGLTSLALFA), 288–308 (LGGVLALLFSILVLMVVPILH), 320–340 (LTQFLFWALVADMLILTWIGG), and 347–367 (FIIIGQVASVIYFTIFLVLSP).

It belongs to the cytochrome b family. In terms of assembly, the cytochrome bc1 complex contains 3 respiratory subunits (MT-CYB, CYC1 and UQCRFS1), 2 core proteins (UQCRC1 and UQCRC2) and probably 6 low-molecular weight proteins. Heme b is required as a cofactor.

The protein localises to the mitochondrion inner membrane. Functionally, component of the ubiquinol-cytochrome c reductase complex (complex III or cytochrome b-c1 complex) that is part of the mitochondrial respiratory chain. The b-c1 complex mediates electron transfer from ubiquinol to cytochrome c. Contributes to the generation of a proton gradient across the mitochondrial membrane that is then used for ATP synthesis. The polypeptide is Cytochrome b (mt-cyb) (Oncorhynchus mykiss (Rainbow trout)).